A 613-amino-acid chain; its full sequence is Epsin-2 (613 aa).

The region spanning 11 to 143 is the ENTH domain; it reads NMMKGYSSTQ…NDEERLREER (133 aa). Disordered regions lie at residues 140–208, 323–351, and 356–375; these read REER…DDED, TAAN…PFSM, and RQKQ…EARQ. The segment covering 148-167 has biased composition (basic residues); it reads RNRRANRAARPRPRRQRTRS. T165 carries the post-translational modification Phosphothreonine. S167 carries the post-translational modification Phosphoserine. 2 UIM domains span residues 175–194 and 206–225; these read SYQD…AQED and DEDP…EELK. The span at 179–188 shows a compositional bias: basic and acidic residues; it reads DLEKALEESR. Residues 323–339 are compositionally biased toward low complexity; it reads TAANMQQQQQQPADFQQ. The segment covering 340 to 350 has biased composition (polar residues); it reads PLPTGSNNPFS. Residue K426 forms a Glycyl lysine isopeptide (Lys-Gly) (interchain with G-Cter in ubiquitin) linkage. T430 bears the Phosphothreonine mark. S434 carries the post-translational modification Phosphoserine. 3 positions are modified to phosphothreonine: T450, T468, and T470. The span at 471 to 512 shows a compositional bias: polar residues; it reads GTFINSQGTGYKQVTNEPKNNPFLSNQYTGLPSTNIVPTQTG. Residues 471–613 are disordered; the sequence is GTFINSQGTG…PDQGVSLIDL (143 aa). The segment covering 526–600 has biased composition (low complexity); the sequence is SPQQNPTGIS…QQQQQQQQQQ (75 aa).

Belongs to the epsin family. In terms of processing, phosphorylated by PRK1.

The protein resides in the cytoplasm. The protein localises to the membrane. Its function is as follows. Binds to membranes enriched in phosphatidylinositol 3,5-bisphosphate (PtdIns(3,5)P2) and phosphatidylinositol 4,5-bisphosphate (PtdIns(4,5)P2). Required for endocytosis and localization of actin. The chain is Epsin-2 (ENT2) from Saccharomyces cerevisiae (strain ATCC 204508 / S288c) (Baker's yeast).